Reading from the N-terminus, the 242-residue chain is Aliphatic sulfonates import ATP-binding protein SsuB 1 (242 aa).

The 217-residue stretch at 11–227 folds into the ABC transporter domain; it reads VAVRRLSRAF…RPSHPDFEDL (217 aa). 43-50 serves as a coordination point for ATP; the sequence is GESGSGKT.

Belongs to the ABC transporter superfamily. Aliphatic sulfonates importer (TC 3.A.1.17.2) family. The complex is composed of two ATP-binding proteins (SsuB), two transmembrane proteins (SsuC) and a solute-binding protein (SsuA).

Its subcellular location is the cell inner membrane. It catalyses the reaction ATP + H2O + aliphatic sulfonate-[sulfonate-binding protein]Side 1 = ADP + phosphate + aliphatic sulfonateSide 2 + [sulfonate-binding protein]Side 1.. Its function is as follows. Part of the ABC transporter complex SsuABC involved in aliphatic sulfonates import. Responsible for energy coupling to the transport system. The protein is Aliphatic sulfonates import ATP-binding protein SsuB 1 of Paracoccus denitrificans (strain Pd 1222).